The chain runs to 251 residues: Cell division protein ZapD (251 aa).

Belongs to the ZapD family. As to quaternary structure, interacts with FtsZ.

Its subcellular location is the cytoplasm. Functionally, cell division factor that enhances FtsZ-ring assembly. Directly interacts with FtsZ and promotes bundling of FtsZ protofilaments, with a reduction in FtsZ GTPase activity. This is Cell division protein ZapD from Janthinobacterium sp. (strain Marseille) (Minibacterium massiliensis).